We begin with the raw amino-acid sequence, 57 residues long: uncharacterized protein (57 aa).

Residues 21–37 traverse the membrane as a helical segment; sequence GTYTLVVAFVLAFLVYS.

It is found in the host membrane. This is an uncharacterized protein from Human herpesvirus 6B (strain Z29) (HHV-6 variant B).